The sequence spans 826 residues: Zinc phosphodiesterase ELAC protein 2 (826 aa).

The transit peptide at 1–16 directs the protein to the mitochondrion; sequence MWALCSLLRSAAGRTM. 2 disordered regions span residues 16 to 51 and 188 to 231; these read MSQG…PSGC and EQRR…VSQR. The segment covering 27–38 has biased composition (basic and acidic residues); the sequence is ARRERPRKDPLR. Serine 199, serine 208, serine 212, serine 229, serine 618, and serine 736 each carry phosphoserine. The segment covering 208-224 has biased composition (basic and acidic residues); it reads SPERSSDSESNENEPHL. The segment at 798–826 is disordered; it reads ELAGGLEDGEPQQKRAHTEEPQAKKVRAQ. Positions 808 to 820 are enriched in basic and acidic residues; it reads PQQKRAHTEEPQA.

The protein belongs to the RNase Z family. Homodimer. Interacts with PTCD1. Zn(2+) serves as cofactor. Widely expressed. Highly expressed in heart, placenta, liver, skeletal muscle, kidney, pancreas, testis and ovary. Weakly expressed in brain, lung, spleen, thymus, prostate, small intestine, colon and leukocytes.

It localises to the mitochondrion. Its subcellular location is the mitochondrion matrix. The protein localises to the mitochondrion nucleoid. The protein resides in the nucleus. The enzyme catalyses Endonucleolytic cleavage of RNA, removing extra 3' nucleotides from tRNA precursor, generating 3' termini of tRNAs. A 3'-hydroxy group is left at the tRNA terminus and a 5'-phosphoryl group is left at the trailer molecule.. Zinc phosphodiesterase, which displays mitochondrial tRNA 3'-processing endonuclease activity. Involved in tRNA maturation, by removing a 3'-trailer from precursor tRNA. Associates with mitochondrial DNA complexes at the nucleoids to initiate RNA processing and ribosome assembly. The sequence is that of Zinc phosphodiesterase ELAC protein 2 (ELAC2) from Homo sapiens (Human).